We begin with the raw amino-acid sequence, 84 residues long: Cell division topological specificity factor (84 aa).

This sequence belongs to the MinE family.

Functionally, prevents the cell division inhibition by proteins MinC and MinD at internal division sites while permitting inhibition at polar sites. This ensures cell division at the proper site by restricting the formation of a division septum at the midpoint of the long axis of the cell. The chain is Cell division topological specificity factor from Cupriavidus necator (strain ATCC 17699 / DSM 428 / KCTC 22496 / NCIMB 10442 / H16 / Stanier 337) (Ralstonia eutropha).